A 741-amino-acid chain; its full sequence is 2-5A-dependent ribonuclease (741 aa).

Residues 1-21 (MESRDHNNPQEGPTSSSGRRA) are disordered. Residues 9–18 (PQEGPTSSSG) show a composition bias toward polar residues. ANK repeat units follow at residues 24–53 (EDNH…NVNF), 58–87 (GGWT…DPVL), 91–120 (NGAT…DVNE), 124–153 (YGFT…NVNL), 167–197 (GGAT…DVNA), 201–234 (MGRN…DVNV), 238–268 (RGKT…EIND), 272–301 (DGKT…STDC), and 303–329 (DLVM…KEDF). 2-5A binding (P-loop) stretches follow at residues 229-242 (GADV…GKTP) and 253-275 (GLVQ…DGKT). Residues 365-586 (IDEKYKIADT…LSDLLGHPFF (222 aa)) enclose the Protein kinase domain. Residues 395-444 (CEGSPRAQREVSCLQSSRENSHLVTFYGSESHRGHLFVCVTLCEQTLEAC) form a C6-type; atypical zinc finger. Positions 589–723 (WESRYRTLRN…KHFPQTHSPN (135 aa)) constitute a KEN domain. Lys684 is subject to N6-acetyllysine. Residues 715–741 (HFPQTHSPNKPQCDGAGGASGLASPGC) are disordered.

The protein belongs to the protein kinase superfamily. In terms of assembly, monomer (inactive form) or homodimer. Interacts with ABCE1; this interaction inhibits the RNASEL. It depends on Mn(2+) as a cofactor. Mg(2+) serves as cofactor. Highly expressed in spleen and thymus followed by prostate, testis, uterus, small intestine, colon and peripheral blood leukocytes.

It is found in the cytoplasm. The protein localises to the mitochondrion. With respect to regulation, after binding to 2-5A (5'-phosphorylated 2',5'-linked oligoadenylates) the homodimerization and subsequent activation occurs. Inhibited by RNASEL inhibitor ABCE1/RLI, a cytoplasmic member of the ATP-binding cassette (ABC) transporter family. Endoribonuclease that functions in the interferon (IFN) antiviral response. In INF treated and virus infected cells, RNASEL probably mediates its antiviral effects through a combination of direct cleavage of single-stranded viral RNAs, inhibition of protein synthesis through the degradation of rRNA, induction of apoptosis, and induction of other antiviral genes. RNASEL mediated apoptosis is the result of a JNK-dependent stress-response pathway leading to cytochrome c release from mitochondria and caspase-dependent apoptosis. Therefore, activation of RNASEL could lead to elimination of virus infected cells under some circumstances. In the crosstalk between autophagy and apoptosis proposed to induce autophagy as an early stress response to small double-stranded RNA and at later stages of prolonged stress to activate caspase-dependent proteolytic cleavage of BECN1 to terminate autophagy and promote apoptosis. Might play a central role in the regulation of mRNA turnover. Cleaves 3' of UpNp dimers, with preference for UU and UA sequences, to sets of discrete products ranging from between 4 and 22 nucleotides in length. This Homo sapiens (Human) protein is 2-5A-dependent ribonuclease (RNASEL).